We begin with the raw amino-acid sequence, 230 residues long: MKKKKALPSFLYLVFIVLLPWGVSFSFNKCLELWIKNWWNTRQSETFLTDIQEKRILEGFIELEELFLLDEMIKEKPKTHVQKLPIGIHKEIIQLAKIDNEDHLHIILHFSTNIICLAILSGSFFLGKEELVILNSWVQEFFYNLNDSIKAFFILLVTDFFVGFHSTRGWELLIRWVYNNLGWAPNELIFTIFVCSFPVILDTCLKFWVFFCLNRLSPSLVVIYHSISEA.

Helical transmembrane passes span 7 to 27 (LPSF…SFSF), 106 to 126 (IILH…SFFL), 145 to 165 (LNDS…VGFH), and 181 to 201 (LGWA…PVIL).

The protein belongs to the CemA family.

Its subcellular location is the plastid. The protein resides in the chloroplast inner membrane. It catalyses the reaction K(+)(in) + H(+)(out) = K(+)(out) + H(+)(in). Contributes to K(+)/H(+) antiport activity by supporting proton efflux to control proton extrusion and homeostasis in chloroplasts in a light-dependent manner to modulate photosynthesis. Prevents excessive induction of non-photochemical quenching (NPQ) under continuous-light conditions. Indirectly promotes efficient inorganic carbon uptake into chloroplasts. The sequence is that of Potassium/proton antiporter CemA from Zea mays (Maize).